We begin with the raw amino-acid sequence, 1029 residues long: Carbamoyl phosphate synthase large chain (1029 aa).

The segment at 1 to 402 is carboxyphosphate synthetic domain; that stretch reads MPKRTDLQTI…SLQKALRSTE (402 aa). Residues Arg129, Arg169, Gly175, Gly176, Glu208, Ile210, Glu215, Gly241, Val242, His243, Gln285, and Glu299 each contribute to the ATP site. The region spanning 133–328 is the ATP-grasp 1 domain; the sequence is QAAMKKIGVE…IAKIAALLAV (196 aa). Mg(2+) contacts are provided by Gln285, Glu299, and Asn301. Mn(2+) is bound by residues Gln285, Glu299, and Asn301. The segment at 403 to 544 is oligomerization domain; it reads SDIRGVYAEM…YHYSTYEWED (142 aa). The segment at 545-929 is carbamoyl phosphate synthetic domain; sequence EVTGTDKPKV…AFYRAQLGAK (385 aa). An ATP-grasp 2 domain is found at 671-863; sequence NALCERLGLS…LAKSAARIAV (193 aa). Residues Arg707, Gln747, Leu749, Glu754, Gly779, Val780, His781, Ser782, Gln822, and Glu834 each coordinate ATP. 3 residues coordinate Mg(2+): Gln822, Glu834, and Asn836. Positions 822, 834, and 836 each coordinate Mn(2+). The region spanning 930 to 1028 is the MGS-like domain; that stretch reads SYLPLSGTAL…QDWQTQEAVA (99 aa). The segment at 930–1029 is allosteric domain; that stretch reads SYLPLSGTAL…DWQTQEAVAG (100 aa).

This sequence belongs to the CarB family. As to quaternary structure, composed of two chains; the small (or glutamine) chain promotes the hydrolysis of glutamine to ammonia, which is used by the large (or ammonia) chain to synthesize carbamoyl phosphate. Tetramer of heterodimers (alpha,beta)4. Mg(2+) serves as cofactor. It depends on Mn(2+) as a cofactor.

The enzyme catalyses hydrogencarbonate + L-glutamine + 2 ATP + H2O = carbamoyl phosphate + L-glutamate + 2 ADP + phosphate + 2 H(+). It catalyses the reaction hydrogencarbonate + NH4(+) + 2 ATP = carbamoyl phosphate + 2 ADP + phosphate + 2 H(+). It functions in the pathway amino-acid biosynthesis; L-arginine biosynthesis; carbamoyl phosphate from bicarbonate: step 1/1. The protein operates within pyrimidine metabolism; UMP biosynthesis via de novo pathway; (S)-dihydroorotate from bicarbonate: step 1/3. Functionally, large subunit of the glutamine-dependent carbamoyl phosphate synthetase (CPSase). CPSase catalyzes the formation of carbamoyl phosphate from the ammonia moiety of glutamine, carbonate, and phosphate donated by ATP, constituting the first step of 2 biosynthetic pathways, one leading to arginine and/or urea and the other to pyrimidine nucleotides. The large subunit (synthetase) binds the substrates ammonia (free or transferred from glutamine from the small subunit), hydrogencarbonate and ATP and carries out an ATP-coupled ligase reaction, activating hydrogencarbonate by forming carboxy phosphate which reacts with ammonia to form carbamoyl phosphate. This chain is Carbamoyl phosphate synthase large chain, found in Deinococcus deserti (strain DSM 17065 / CIP 109153 / LMG 22923 / VCD115).